The primary structure comprises 166 residues: Flagellar protein LafL (166 aa).

A helical transmembrane segment spans residues 6–26 (MIAMFIAMIITSALVSAATIM).

The protein belongs to the FliL family.

It localises to the cell inner membrane. Functionally, controls the rotational direction of flagella during chemotaxis. The polypeptide is Flagellar protein LafL (lafL) (Vibrio parahaemolyticus serotype O3:K6 (strain RIMD 2210633)).